Reading from the N-terminus, the 210-residue chain is Uridine kinase (210 aa).

14–21 (GGSGSGKT) lines the ATP pocket.

Belongs to the uridine kinase family.

Its subcellular location is the cytoplasm. The enzyme catalyses uridine + ATP = UMP + ADP + H(+). It catalyses the reaction cytidine + ATP = CMP + ADP + H(+). Its pathway is pyrimidine metabolism; CTP biosynthesis via salvage pathway; CTP from cytidine: step 1/3. The protein operates within pyrimidine metabolism; UMP biosynthesis via salvage pathway; UMP from uridine: step 1/1. The sequence is that of Uridine kinase from Deinococcus radiodurans (strain ATCC 13939 / DSM 20539 / JCM 16871 / CCUG 27074 / LMG 4051 / NBRC 15346 / NCIMB 9279 / VKM B-1422 / R1).